The following is a 139-amino-acid chain: MRAAAPALSLLLCCTAPANAQQPEPDCRKAVSQMDLNICADQDYRAADAELNKTYRLVVAAMQATDKELGDIDAAYAGALEALKKAQRAWIGYRDGQCELAGFEARGGSMEPMLVSGCLAELTRKRTAELKELMESAEN.

It to E.coli YecT.

This is an uncharacterized protein from Rhizobium meliloti (strain 1021) (Ensifer meliloti).